A 578-amino-acid polypeptide reads, in one-letter code: Penicillin-binding protein activator LpoA (578 aa).

A signal peptide spans 1–30 (MPTILVQSYGFRQKMKTIFIPTALALLLAA). A lipid anchor (N-palmitoyl cysteine) is attached at Cys31. Residue Cys31 is the site of S-diacylglycerol cysteine attachment.

Belongs to the LpoA family. Interacts with PBP1a.

The protein resides in the cell outer membrane. In terms of biological role, regulator of peptidoglycan synthesis that is essential for the function of penicillin-binding protein 1A (PBP1a). The protein is Penicillin-binding protein activator LpoA of Glaesserella parasuis serovar 5 (strain SH0165) (Haemophilus parasuis).